Here is a 206-residue protein sequence, read N- to C-terminus: Small ribosomal subunit protein uS4 (206 aa).

Positions 94-156 (RRLDNVVYRL…SRRRMYFKNL (63 aa)) constitute an S4 RNA-binding domain.

This sequence belongs to the universal ribosomal protein uS4 family. Part of the 30S ribosomal subunit. Contacts protein S5. The interaction surface between S4 and S5 is involved in control of translational fidelity.

One of the primary rRNA binding proteins, it binds directly to 16S rRNA where it nucleates assembly of the body of the 30S subunit. Its function is as follows. With S5 and S12 plays an important role in translational accuracy. The protein is Small ribosomal subunit protein uS4 of Roseiflexus castenholzii (strain DSM 13941 / HLO8).